Consider the following 177-residue polypeptide: Phycoerythrin beta subunit (177 aa).

Positions 18, 28, 35, and 39 each coordinate (2R,3E)-phycoerythrobilin. 15,16-dihydrobiliverdin-binding residues include Cys-50, Asp-54, and Cys-61. Residues Cys-82, Arg-84, and Asp-85 each coordinate (2R,3E)-phycoerythrobilin. Position 129 (Arg-129) interacts with 15,16-dihydrobiliverdin. Asn-144 provides a ligand contact to (2R,3E)-phycoerythrobilin. Residues Gln-148 and Lys-149 each coordinate 15,16-dihydrobiliverdin. Pro-154, Gly-156, and Cys-158 together coordinate (2R,3E)-phycoerythrobilin.

Belongs to the phycobiliprotein family. As to quaternary structure, heterotetramer of 2 different alpha chains and 2 identical beta chains which form 2 alpha-beta heterodimers within the heterotetramer. The two alpha-beta heterodimers are rotated to an open configuration in contrast to the closed configuration found in other cryptophyte species due to the insertion of a single amino acid, 'Asp-65', in a conserved region of the alpha chain. In the open form, the central chromophores are not in physical contact but are separated by a water-filled channel. Post-translationally, contains three phycoerythrobilin chromophores and one 15,16-dihydrobiliverdin chromophore with binding of the phycoerythrobilin chromophores mediated by both the alpha and beta subunits.

It localises to the plastid. Its subcellular location is the chloroplast thylakoid membrane. Light-harvesting photosynthetic bile pigment-protein from the phycobiliprotein complex. In Hemiselmis andersenii (Cryptophyte alga), this protein is Phycoerythrin beta subunit.